We begin with the raw amino-acid sequence, 485 residues long: Hexokinase-1 (485 aa).

The region spanning 21–468 is the Hexokinase domain; sequence KELMDEIHQL…SGAGAAVIAA (448 aa). Positions 75–209 are hexokinase small subdomain; that stretch reads TGKESGNYLA…ELPIEIVALI (135 aa). Residues 86–91 and lysine 111 each bind ATP; that span reads DLGGTN. Substrate is bound by residues serine 158, 175 to 176, 210 to 211, and asparagine 237; these read TK and ND. A hexokinase large subdomain region spans residues 210-457; it reads NDTVGTLIAS…DPITIVPAED (248 aa). Serine 245 bears the Phosphoserine mark. Residue glutamate 269 participates in substrate binding. Phosphoserine is present on serine 272. A substrate-binding site is contributed by glutamate 302. ATP is bound by residues 307 to 308, 344 to 348, and 419 to 423; these read GY, TSYPA, and SVYNK.

Belongs to the hexokinase family. As to quaternary structure, homodimer.

It carries out the reaction a D-hexose + ATP = a D-hexose 6-phosphate + ADP + H(+). The enzyme catalyses D-fructose + ATP = D-fructose 6-phosphate + ADP + H(+). The catalysed reaction is D-glucose + ATP = D-glucose 6-phosphate + ADP + H(+). It participates in carbohydrate metabolism; hexose metabolism. Its pathway is carbohydrate degradation; glycolysis; D-glyceraldehyde 3-phosphate and glycerone phosphate from D-glucose: step 1/4. Its activity is regulated as follows. Subject to allosteric control. Substrate inhibition by ATP. Functionally, catalyzes the phosphorylation of hexose, such as D-glucose and D-fructose, to hexose 6-phosphate (D-glucose 6-phosphate and D-fructose 6-phosphate, respectively). Mediates the initial step of glycolysis by catalyzing phosphorylation of D-glucose to D-glucose 6-phosphate. The polypeptide is Hexokinase-1 (HXK1) (Saccharomyces cerevisiae (strain ATCC 204508 / S288c) (Baker's yeast)).